A 238-amino-acid chain; its full sequence is 5'-deoxynucleotidase YBR242W (238 aa).

Residues 77 to 183 (ISDHMYRLSI…VKDIDKYEML (107 aa)) enclose the HD domain. Positions 80, 108, 109, 112, 117, 118, and 178 each coordinate a divalent metal cation.

This sequence belongs to the HDDC2 family. Homodimer. Requires Mn(2+) as cofactor. The cofactor is Co(2+). Mg(2+) serves as cofactor.

It catalyses the reaction a 2'-deoxyribonucleoside 5'-phosphate + H2O = a 2'-deoxyribonucleoside + phosphate. In terms of biological role, catalyzes the dephosphorylation of the nucleoside 5'-monophosphates deoxyadenosine monophosphate (dAMP), deoxycytidine monophosphate (dCMP), deoxyguanosine monophosphate (dGMP) and deoxythymidine monophosphate (dTMP). This Saccharomyces cerevisiae (strain ATCC 204508 / S288c) (Baker's yeast) protein is 5'-deoxynucleotidase YBR242W.